The chain runs to 334 residues: Spermatogenesis-associated protein 32 (334 aa).

The segment at 24-98 is disordered; it reads SDHHRHHHHH…TESPEQQNYR (75 aa). A compositionally biased stretch (acidic residues) spans 37–47; that stretch reads ENEDEDTEVEA. Positions 48-60 are enriched in basic and acidic residues; the sequence is ELPRTEPPPKVDP. Positions 77-98 are enriched in polar residues; that stretch reads SKTTPETEGDSYTESPEQQNYR. Residues Ser135 and Ser138 each carry the phosphoserine modification.

As to quaternary structure, interacts with syntaxin-1 and ACTB. In terms of tissue distribution, highly expressed in the testis and weakly in the brain and heart.

In Mus musculus (Mouse), this protein is Spermatogenesis-associated protein 32 (Spata32).